Consider the following 367-residue polypeptide: Aflatoxin B1 aldehyde reductase member 2 (367 aa).

A mitochondrion-targeting transit peptide spans 1–46 (MLRAVSRAVSRAAVRCAWRSGPSVARPLAMSRSPAPRAVSGAPLRP). The segment at 27 to 46 (PLAMSRSPAPRAVSGAPLRP) is disordered. Phosphoserine is present on S40. T48 is modified (phosphothreonine). Residue D80 coordinates NADP(+). Y85 functions as the Proton donor in the catalytic mechanism. K136 is modified (N6-acetyllysine). H149 is a binding site for substrate. Residues 179–180 (SN), Q205, 234–244 (NPLAGGLLTGK), and R258 each bind NADP(+). K244 is subject to N6-succinyllysine. Residue S263 is modified to Phosphoserine. Substrate contacts are provided by Y268 and R271. NADP(+) is bound at residue 326–334 (SSLEQLEQN). Substrate is bound at residue R367.

It belongs to the aldo/keto reductase family. Aldo/keto reductase 2 subfamily. In terms of assembly, homodimer. Heterodimer with AKR7A1.

Its subcellular location is the mitochondrion. The protein localises to the golgi apparatus. The protein resides in the golgi stack. It localises to the cytoplasm. The enzyme catalyses 4-hydroxybutanoate + NADP(+) = succinate semialdehyde + NADPH + H(+). Functionally, catalyzes the NADPH-dependent reduction of succinic semialdehyde to gamma-hydroxybutyrate. May have an important role in producing the neuromodulator gamma-hydroxybutyrate (GHB). Has broad substrate specificity. Can reduce the dialdehyde protein-binding form of aflatoxin B1 (AFB1) to the non-binding AFB1 dialcohol. Acts as a 2-carboxybenzaldehyde reductase. The chain is Aflatoxin B1 aldehyde reductase member 2 (Akr7a2) from Rattus norvegicus (Rat).